The primary structure comprises 226 residues: MADINKYIPMVDAILSVSNPDEISPKRVRKALQILYSVNLDSQRKLINELILERFGDIQENPRVLIPKNDLISRDQELSLRLQKEEERPLRSTRKRKGKSESKSKRKKKKNDSPDSNSISVRKVLLSAPLQKFLGSEELPRTQVVKMIWQYIKEHDLQNPKDRREILCDEKMEPIFGKKMTMFSMNKLLTKHLFNPDEIVKHEEEQKQTPEKEIKLENESLPNLSG.

Residues 1 to 56 (MADINKYIPMVDAILSVSNPDEISPKRVRKALQILYSVNLDSQRKLINELILERFG) form the DEK-C domain. Residues 83-118 (QKEEERPLRSTRKRKGKSESKSKRKKKKNDSPDSNS) form a disordered region. The span at 91–110 (RSTRKRKGKSESKSKRKKKK) shows a compositional bias: basic residues. A Phosphoserine modification is found at Ser113. The region spanning 119-195 (ISVRKVLLSA…NKLLTKHLFN (77 aa)) is the SWIB/MDM2 domain. Over residues 200-218 (VKHEEEQKQTPEKEIKLEN) the composition is skewed to basic and acidic residues. The segment at 200 to 226 (VKHEEEQKQTPEKEIKLENESLPNLSG) is disordered. Residues Lys201 and Lys215 each participate in a glycyl lysine isopeptide (Lys-Gly) (interchain with G-Cter in SUMO) cross-link. Residue Ser225 is modified to Phosphoserine.

The protein resides in the cytoplasm. The protein localises to the nucleus. Its subcellular location is the nucleolus. In terms of biological role, may be involved in transcription regulation. The sequence is that of Protein TRI1 (TRI1) from Saccharomyces cerevisiae (strain ATCC 204508 / S288c) (Baker's yeast).